An 845-amino-acid chain; its full sequence is Protein translocase subunit SecA (845 aa).

ATP-binding positions include Q85, G103–T107, and D492. Residues R787–A845 are disordered. Zn(2+) is bound by residues C829, C831, C840, and H841. A compositionally biased stretch (basic residues) spans K835–A845.

It belongs to the SecA family. As to quaternary structure, monomer and homodimer. Part of the essential Sec protein translocation apparatus which comprises SecA, SecYEG and auxiliary proteins SecDF. Other proteins may also be involved. It depends on Zn(2+) as a cofactor.

It is found in the cell membrane. It localises to the cytoplasm. The enzyme catalyses ATP + H2O + cellular proteinSide 1 = ADP + phosphate + cellular proteinSide 2.. Its function is as follows. Part of the Sec protein translocase complex. Interacts with the SecYEG preprotein conducting channel. Has a central role in coupling the hydrolysis of ATP to the transfer of proteins into and across the cell membrane, serving as an ATP-driven molecular motor driving the stepwise translocation of polypeptide chains across the membrane. In Enterococcus faecalis (strain ATCC 700802 / V583), this protein is Protein translocase subunit SecA.